A 178-amino-acid chain; its full sequence is UPF0228 protein MA_4223 (178 aa).

It belongs to the UPF0228 family.

The chain is UPF0228 protein MA_4223 from Methanosarcina acetivorans (strain ATCC 35395 / DSM 2834 / JCM 12185 / C2A).